We begin with the raw amino-acid sequence, 433 residues long: Xylose isomerase (433 aa).

Residues H99 and D102 contribute to the active site. 7 residues coordinate Mg(2+): E230, E266, H269, D294, D305, D307, and D337.

Belongs to the xylose isomerase family. Homotetramer. Mg(2+) is required as a cofactor.

The protein localises to the cytoplasm. It carries out the reaction alpha-D-xylose = alpha-D-xylulofuranose. In Roseobacter denitrificans (strain ATCC 33942 / OCh 114) (Erythrobacter sp. (strain OCh 114)), this protein is Xylose isomerase.